The chain runs to 407 residues: Argininosuccinate synthase (407 aa).

Residues 11-19 and Ala-38 each bind ATP; that span reads AYSGGLDTS. L-citrulline-binding residues include Tyr-91 and Ser-96. Gly-121 is a binding site for ATP. L-aspartate is bound by residues Thr-123, Asn-127, and Asp-128. Asn-127 contributes to the L-citrulline binding site. Positions 131, 181, 190, 266, and 278 each coordinate L-citrulline.

This sequence belongs to the argininosuccinate synthase family. Type 1 subfamily. As to quaternary structure, homotetramer.

It localises to the cytoplasm. The enzyme catalyses L-citrulline + L-aspartate + ATP = 2-(N(omega)-L-arginino)succinate + AMP + diphosphate + H(+). It participates in amino-acid biosynthesis; L-arginine biosynthesis; L-arginine from L-ornithine and carbamoyl phosphate: step 2/3. This Campylobacter concisus (strain 13826) protein is Argininosuccinate synthase.